Here is a 170-residue protein sequence, read N- to C-terminus: ATP synthase subunit b, chloroplastic (170 aa).

A helical transmembrane segment spans residues 15–35; sequence ILETNVINLAVVVGVVVFFVG.

Belongs to the ATPase B chain family. F-type ATPases have 2 components, F(1) - the catalytic core - and F(0) - the membrane proton channel. F(1) has five subunits: alpha(3), beta(3), gamma(1), delta(1), epsilon(1). F(0) has four main subunits: a(1), b(1), b'(1) and c(10-14). The alpha and beta chains form an alternating ring which encloses part of the gamma chain. F(1) is attached to F(0) by a central stalk formed by the gamma and epsilon chains, while a peripheral stalk is formed by the delta, b and b' chains.

Its subcellular location is the plastid. The protein localises to the chloroplast thylakoid membrane. F(1)F(0) ATP synthase produces ATP from ADP in the presence of a proton or sodium gradient. F-type ATPases consist of two structural domains, F(1) containing the extramembraneous catalytic core and F(0) containing the membrane proton channel, linked together by a central stalk and a peripheral stalk. During catalysis, ATP synthesis in the catalytic domain of F(1) is coupled via a rotary mechanism of the central stalk subunits to proton translocation. Its function is as follows. Component of the F(0) channel, it forms part of the peripheral stalk, linking F(1) to F(0). The protein is ATP synthase subunit b, chloroplastic of Stigeoclonium helveticum (Green alga).